The sequence spans 368 residues: Methionine import ATP-binding protein MetN (368 aa).

A compositionally biased stretch (polar residues) spans 1–14 (MASDAQPSVDQPSA). The tract at residues 1 to 27 (MASDAQPSVDQPSAGTPGATGNSTGTT) is disordered. The segment covering 15–27 (GTPGATGNSTGTT) has biased composition (low complexity). Residues 31–270 (IVFRDVTKIF…PQTKTAANFV (240 aa)) enclose the ABC transporter domain. 67 to 74 (GYSGAGKS) provides a ligand contact to ATP.

The protein belongs to the ABC transporter superfamily. Methionine importer (TC 3.A.1.24) family. The complex is composed of two ATP-binding proteins (MetN), two transmembrane proteins (MetI) and a solute-binding protein (MetQ).

The protein resides in the cell membrane. The catalysed reaction is L-methionine(out) + ATP + H2O = L-methionine(in) + ADP + phosphate + H(+). It catalyses the reaction D-methionine(out) + ATP + H2O = D-methionine(in) + ADP + phosphate + H(+). Part of the ABC transporter complex MetNIQ involved in methionine import. Responsible for energy coupling to the transport system. The protein is Methionine import ATP-binding protein MetN of Corynebacterium jeikeium (strain K411).